Consider the following 405-residue polypeptide: Aminodeoxyfutalosine deaminase (405 aa).

2 residues coordinate a divalent metal cation: H61 and H63. 3 residues coordinate substrate: E141, S145, and H179. An a divalent metal cation-binding site is contributed by H206. Catalysis depends on E209, which acts as the Proton donor. Residue D306 coordinates a divalent metal cation.

The protein belongs to the metallo-dependent hydrolases superfamily. Requires a divalent metal cation as cofactor.

The catalysed reaction is 6-amino-6-deoxyfutalosine + H2O + H(+) = futalosine + NH4(+). It participates in quinol/quinone metabolism; menaquinone biosynthesis. Catalyzes the deamination of aminodeoxyfutalosine (AFL) into futalosine (FL), a step in the biosynthesis of menaquinone (MK, vitamin K2). To a lesser extent, can also deaminate 5'-methylthioadenosine. This is Aminodeoxyfutalosine deaminase from Nitratiruptor sp. (strain SB155-2).